The chain runs to 93 residues: uncharacterized protein (93 aa).

The protein belongs to the BolA/IbaG family.

This is an uncharacterized protein from Sinorhizobium sp.